The primary structure comprises 88 residues: Putative membrane protein insertion efficiency factor (88 aa).

The protein belongs to the UPF0161 family.

It localises to the cell membrane. Functionally, could be involved in insertion of integral membrane proteins into the membrane. The sequence is that of Putative membrane protein insertion efficiency factor from Exiguobacterium sibiricum (strain DSM 17290 / CCUG 55495 / CIP 109462 / JCM 13490 / 255-15).